Reading from the N-terminus, the 357-residue chain is Peptide chain release factor 1 (357 aa).

Gln-234 is modified (N5-methylglutamine).

Belongs to the prokaryotic/mitochondrial release factor family. Post-translationally, methylated by PrmC. Methylation increases the termination efficiency of RF1.

It is found in the cytoplasm. Its function is as follows. Peptide chain release factor 1 directs the termination of translation in response to the peptide chain termination codons UAG and UAA. The chain is Peptide chain release factor 1 from Chlorobaculum tepidum (strain ATCC 49652 / DSM 12025 / NBRC 103806 / TLS) (Chlorobium tepidum).